The primary structure comprises 210 residues: Putative 3-methyladenine DNA glycosylase (210 aa).

Belongs to the DNA glycosylase MPG family.

This is Putative 3-methyladenine DNA glycosylase from Lactobacillus helveticus (strain DPC 4571).